A 310-amino-acid polypeptide reads, in one-letter code: Ribose-phosphate pyrophosphokinase (310 aa).

ATP contacts are provided by residues 34 to 36 (DQE) and 93 to 94 (RQ). Mg(2+) is bound by residues His127 and Asp167. Lys190 is an active-site residue. D-ribose 5-phosphate is bound by residues Arg192, Asp216, and 220-224 (DSGGT).

It belongs to the ribose-phosphate pyrophosphokinase family. Class I subfamily. In terms of assembly, homohexamer. The cofactor is Mg(2+).

The protein localises to the cytoplasm. The catalysed reaction is D-ribose 5-phosphate + ATP = 5-phospho-alpha-D-ribose 1-diphosphate + AMP + H(+). The protein operates within metabolic intermediate biosynthesis; 5-phospho-alpha-D-ribose 1-diphosphate biosynthesis; 5-phospho-alpha-D-ribose 1-diphosphate from D-ribose 5-phosphate (route I): step 1/1. Its function is as follows. Involved in the biosynthesis of the central metabolite phospho-alpha-D-ribosyl-1-pyrophosphate (PRPP) via the transfer of pyrophosphoryl group from ATP to 1-hydroxyl of ribose-5-phosphate (Rib-5-P). This is Ribose-phosphate pyrophosphokinase from Brucella melitensis biotype 1 (strain ATCC 23456 / CCUG 17765 / NCTC 10094 / 16M).